Reading from the N-terminus, the 449-residue chain is Histidinol dehydrogenase (449 aa).

NAD(+) contacts are provided by tyrosine 136, glutamine 204, and asparagine 232. The substrate site is built by threonine 255, glutamine 277, and histidine 280. Zn(2+) contacts are provided by glutamine 277 and histidine 280. Residues glutamate 346 and histidine 347 each act as proton acceptor in the active site. Positions 347, 380, 434, and 439 each coordinate substrate. Aspartate 380 lines the Zn(2+) pocket. Histidine 439 is a binding site for Zn(2+).

Belongs to the histidinol dehydrogenase family. Requires Zn(2+) as cofactor.

The catalysed reaction is L-histidinol + 2 NAD(+) + H2O = L-histidine + 2 NADH + 3 H(+). The protein operates within amino-acid biosynthesis; L-histidine biosynthesis; L-histidine from 5-phospho-alpha-D-ribose 1-diphosphate: step 9/9. Its function is as follows. Catalyzes the sequential NAD-dependent oxidations of L-histidinol to L-histidinaldehyde and then to L-histidine. The sequence is that of Histidinol dehydrogenase (hisD) from Mycobacterium leprae (strain TN).